We begin with the raw amino-acid sequence, 488 residues long: MVATCNNGEILHVLFLPFLSAGHFIPLVNAARLFASRGVKATILTTPHNALLFRSTIDDDVRISGFPISIVTIKFPSAEVGLPEGIESFNSATSPEMPHKIFYALSLLQKPMEDKIRELRPDCIFSDMYFPWTVDIADELHIPRILYNLSAYMCYSIMHNLKVYRPHKQPNLDESQSFVVPGLPDEIKFKLSQLTDDLRKSDDQKTVFDELLEQVEDSEERSYGIVHDTFYELEPAYVDYYQKLKKPKCWHFGPLSHFASKIRSKELISEHNNNEIVIDWLNAQKPKSVLYVSFGSMARFPESQLNEIAQALDASNVPFIFVLRPNEETASWLPVGNLEDKTKKGLYIKGWVPQLTIMEHSATGGFMTHCGTNSVLEAITFGVPMITWPLYADQFYNEKVVEVRGLGIKIGIDVWNEGIEITGPVIESAKIREAIERLMISNGSEEIINIRDRVMAMSKMAQNATNEGGSSWNNLTALIQHIKNYNLN.

The active-site Proton acceptor is H23. An an anthocyanidin-binding site is contributed by H23. Catalysis depends on D127, which acts as the Charge relay. Residues V352, Q354, H369, N373, S374, and E377 each contribute to the UDP-alpha-D-glucose site. A392 lines the an anthocyanidin pocket. The UDP-alpha-D-glucose site is built by D393 and Q394.

The protein belongs to the UDP-glycosyltransferase family. Expressed in the shoot apical meristem (SAM) and tuber.

The catalysed reaction is solasodine + UDP-alpha-D-glucose = solasodine 3-beta-D-glucoside + UDP + H(+). It carries out the reaction solanidine + UDP-alpha-D-glucose = solanidine 3-O-beta-D-glucopyranoside + UDP + H(+). It catalyses the reaction tomatidine + UDP-alpha-D-glucose = tomatidine 3-O-beta-D-glucopyranoside + UDP + H(+). Functionally, glucosyltransferase involved in the glucosylation of the steroidal alkaloid aglycons solanidine, solasodine and tomatidine to produce their corresponding glycoalkaloids. This is Solanidine UDP-glucose glucosyltransferase 1 from Solanum tuberosum (Potato).